A 455-amino-acid chain; its full sequence is Glycosyl hydrolase family 109 protein (455 aa).

Positions 1-33 (MAGIDRRGFLKASMASVAAAALAGCASQQGTSA) form a signal peptide, tat-type signal. NAD(+)-binding positions include 62–63 (ER), Asp-84, Gln-112, 133–136 (WALH), 153–154 (EV), and Asn-182. Residues Tyr-211, Arg-230, 242–245 (YPTH), and Tyr-324 each bind substrate. Tyr-242 provides a ligand contact to NAD(+).

This sequence belongs to the Gfo/Idh/MocA family. Glycosyl hydrolase 109 subfamily. It depends on NAD(+) as a cofactor. Predicted to be exported by the Tat system. The position of the signal peptide cleavage has not been experimentally proven.

In terms of biological role, glycosidase. The chain is Glycosyl hydrolase family 109 protein from Shewanella amazonensis (strain ATCC BAA-1098 / SB2B).